A 50-amino-acid chain; its full sequence is Large ribosomal subunit protein bL33A (50 aa).

It belongs to the bacterial ribosomal protein bL33 family.

The protein is Large ribosomal subunit protein bL33A (rpmG1) of Mycoplasmopsis pulmonis (strain UAB CTIP) (Mycoplasma pulmonis).